The chain runs to 379 residues: MNYQKILIRYGELVLKKKNRSLFISILKQNIQKILDTKVEDEFDRMFVEYKDEFLDKLKFIPGISSFSPVKVCEKKLENIQQEVLEETQKNTNEFTKTFKIISRRSDKNFELNSLEMNNYFGSLILKNFELKVDVKKPDLNINIEVGRHHAFVFCKIYYSIGGLPVSSSGKSLHLLSGGIDSPVAAIELMKRGIKVEFLAFVTPPHTDEKTVNKLMMLKDVFNKFQHDSKIHLVNYTKIMNYISLISDQSYKIALMRRSFYRIADKIAKRKKIMAISNGENLGQVASQTIESMICISSQTNLLIFRPLLAWNKVDIINLGQKYKTYQISTIPASESCELFAPEKPVIKPTISKAEELEKELEKIFEYEDELVESVLSQK.

In terms of domain architecture, THUMP spans 52–157 (DEFLDKLKFI…RHHAFVFCKI (106 aa)). Residues 175–176 (LL), R257, G279, and Q288 contribute to the ATP site.

The protein belongs to the ThiI family.

It is found in the cytoplasm. The enzyme catalyses [ThiI sulfur-carrier protein]-S-sulfanyl-L-cysteine + a uridine in tRNA + 2 reduced [2Fe-2S]-[ferredoxin] + ATP + H(+) = [ThiI sulfur-carrier protein]-L-cysteine + a 4-thiouridine in tRNA + 2 oxidized [2Fe-2S]-[ferredoxin] + AMP + diphosphate. It catalyses the reaction [ThiS sulfur-carrier protein]-C-terminal Gly-Gly-AMP + S-sulfanyl-L-cysteinyl-[cysteine desulfurase] + AH2 = [ThiS sulfur-carrier protein]-C-terminal-Gly-aminoethanethioate + L-cysteinyl-[cysteine desulfurase] + A + AMP + 2 H(+). Its pathway is cofactor biosynthesis; thiamine diphosphate biosynthesis. Its function is as follows. Catalyzes the ATP-dependent transfer of a sulfur to tRNA to produce 4-thiouridine in position 8 of tRNAs, which functions as a near-UV photosensor. Also catalyzes the transfer of sulfur to the sulfur carrier protein ThiS, forming ThiS-thiocarboxylate. This is a step in the synthesis of thiazole, in the thiamine biosynthesis pathway. The sulfur is donated as persulfide by IscS. This chain is Probable tRNA sulfurtransferase, found in Mycoplasmopsis pulmonis (strain UAB CTIP) (Mycoplasma pulmonis).